Here is a 183-residue protein sequence, read N- to C-terminus: Potassium-transporting ATPase KdpC subunit (183 aa).

Residues 11-31 (LALLMTLLTGVLYPLAVTGVA) form a helical membrane-spanning segment.

Belongs to the KdpC family. In terms of assembly, the system is composed of three essential subunits: KdpA, KdpB and KdpC.

The protein localises to the cell inner membrane. Part of the high-affinity ATP-driven potassium transport (or Kdp) system, which catalyzes the hydrolysis of ATP coupled with the electrogenic transport of potassium into the cytoplasm. This subunit acts as a catalytic chaperone that increases the ATP-binding affinity of the ATP-hydrolyzing subunit KdpB by the formation of a transient KdpB/KdpC/ATP ternary complex. The protein is Potassium-transporting ATPase KdpC subunit of Pseudomonas putida (strain GB-1).